A 215-amino-acid chain; its full sequence is CASP-like protein UU3 (215 aa).

The Cytoplasmic portion of the chain corresponds to 1–44; the sequence is MATAWESEYFDKVTPGERERAVPPMVPQQTPPPVYIQPQVSRNG. The chain crosses the membrane as a helical span at residues 45–65; it reads IVASIVLRLLTLIFAVVALAV. The Extracellular segment spans residues 66–93; sequence LASNTGSFQVSTGSATSVKTIKFTILSA. The helical transmembrane segment at 94 to 114 threads the bilayer; the sequence is FTYLFAVCGVVAVYSLLLIIV. Residues 115-128 are Cytoplasmic-facing; that stretch reads EMIDLAVRGFTTHT. A helical membrane pass occupies residues 129-149; that stretch reads LVAIFVFVLDQTMAYVLISAA. The Extracellular segment spans residues 150–185; the sequence is SASANGVKVSRDESNITGYKFDISCSNLGIDDYCTK. An N-linked (GlcNAc...) asparagine glycan is attached at asparagine 164. Residues 186–206 form a helical membrane-spanning segment; sequence ASASVAIAFIAFLFMAITAGV. Residues 207 to 215 are Cytoplasmic-facing; the sequence is SARRLFKLP.

This sequence belongs to the Casparian strip membrane proteins (CASP) family. In terms of assembly, homodimer and heterodimers.

The protein localises to the cell membrane. This Physcomitrium patens (Spreading-leaved earth moss) protein is CASP-like protein UU3.